A 506-amino-acid polypeptide reads, in one-letter code: Cobyric acid synthase (506 aa).

The region spanning 251–448 is the GATase cobBQ-type domain; sequence DITIAIVQLP…LHGLFDSDAF (198 aa). Cys332 serves as the catalytic Nucleophile. Residue His440 is part of the active site.

Belongs to the CobB/CobQ family. CobQ subfamily.

Its pathway is cofactor biosynthesis; adenosylcobalamin biosynthesis. Functionally, catalyzes amidations at positions B, D, E, and G on adenosylcobyrinic A,C-diamide. NH(2) groups are provided by glutamine, and one molecule of ATP is hydrogenolyzed for each amidation. This is Cobyric acid synthase from Salmonella dublin (strain CT_02021853).